Consider the following 427-residue polypeptide: Cryptic catabolic NAD-specific glutamate dehydrogenase GudB (427 aa).

Residues Lys80 and Lys107 each contribute to the substrate site. Residue Lys119 is the Proton donor of the active site. Thr203 and Asn234 together coordinate NAD(+). Ser361 contacts substrate.

This sequence belongs to the Glu/Leu/Phe/Val dehydrogenases family. Homohexamer.

It catalyses the reaction L-glutamate + NAD(+) + H2O = 2-oxoglutarate + NH4(+) + NADH + H(+). In terms of biological role, gudB seems to be intrinsically inactive, however spontaneous mutations removing a 9-bp direct repeat within the wild-type gudB sequence activated the GudB protein and allowed more-efficient utilization of amino acids of the glutamate family (called gutB1). This 3 amino acid insertion presumably causes severe destabilization of the fold of the protein, leading to an inactive enzyme that is very quickly degraded. The cryptic GudB serves as a buffer that may compensate for mutations in the rocG gene and that can also be decryptified for the utilization of glutamate as a single carbon source in the absence of arginine. It is unable to synthesize glutamate. This Bacillus subtilis (strain 168) protein is Cryptic catabolic NAD-specific glutamate dehydrogenase GudB.